We begin with the raw amino-acid sequence, 209 residues long: Shikimate kinase (209 aa).

Position 47–52 (47–52) interacts with ATP; that stretch reads GAGKTT. Thr-51 is a binding site for Mg(2+). Positions 69, 93, and 115 each coordinate substrate. Arg-153 contributes to the ATP binding site. Arg-172 lines the substrate pocket.

It belongs to the shikimate kinase family. As to quaternary structure, monomer. It depends on Mg(2+) as a cofactor.

It is found in the cytoplasm. It catalyses the reaction shikimate + ATP = 3-phosphoshikimate + ADP + H(+). It functions in the pathway metabolic intermediate biosynthesis; chorismate biosynthesis; chorismate from D-erythrose 4-phosphate and phosphoenolpyruvate: step 5/7. Catalyzes the specific phosphorylation of the 3-hydroxyl group of shikimic acid using ATP as a cosubstrate. This is Shikimate kinase from Bordetella avium (strain 197N).